A 155-amino-acid polypeptide reads, in one-letter code: Large ribosomal subunit protein uL16 (155 aa).

Belongs to the universal ribosomal protein uL16 family. In terms of assembly, part of the 50S ribosomal subunit.

Functionally, binds 23S rRNA and is also seen to make contacts with the A and possibly P site tRNAs. This chain is Large ribosomal subunit protein uL16, found in Synechococcus sp. (strain CC9311).